A 165-amino-acid chain; its full sequence is Transcriptional regulator MraZ (165 aa).

SpoVT-AbrB domains lie at 5-51 (TYEG…GEEL) and 80-123 (SAEL…NPER).

It belongs to the MraZ family. Forms oligomers.

It is found in the cytoplasm. It localises to the nucleoid. The sequence is that of Transcriptional regulator MraZ from Hyphomonas neptunium (strain ATCC 15444).